The chain runs to 484 residues: ATP synthase subunit beta (484 aa).

Residue 152–159 participates in ATP binding; it reads GGAGVGKT.

The protein belongs to the ATPase alpha/beta chains family. In terms of assembly, F-type ATPases have 2 components, CF(1) - the catalytic core - and CF(0) - the membrane proton channel. CF(1) has five subunits: alpha(3), beta(3), gamma(1), delta(1), epsilon(1). CF(0) has three main subunits: a(1), b(2) and c(9-12). The alpha and beta chains form an alternating ring which encloses part of the gamma chain. CF(1) is attached to CF(0) by a central stalk formed by the gamma and epsilon chains, while a peripheral stalk is formed by the delta and b chains.

The protein localises to the cell inner membrane. The catalysed reaction is ATP + H2O + 4 H(+)(in) = ADP + phosphate + 5 H(+)(out). Functionally, produces ATP from ADP in the presence of a proton gradient across the membrane. The catalytic sites are hosted primarily by the beta subunits. This is ATP synthase subunit beta from Campylobacter lari (strain RM2100 / D67 / ATCC BAA-1060).